Here is a 532-residue protein sequence, read N- to C-terminus: Muscarinic acetylcholine receptor M5 (532 aa).

The Extracellular portion of the chain corresponds to 1 to 29 (MEGDSYHNATTVNGTPVYHQPLERHRLWE). A glycan (N-linked (GlcNAc...) asparagine) is linked at Asn-8. Residues 30 to 53 (VISIAAVTAVVSLITIVGNVLVMI) form a helical membrane-spanning segment. The Cytoplasmic segment spans residues 54 to 66 (SFKVNSQLKTVNN). A helical membrane pass occupies residues 67 to 87 (YYLLSLACADLIIGIFSMNLY). The Extracellular segment spans residues 88 to 104 (TTYILMGRWALGSLACD). Cys-103 and Cys-183 are disulfide-bonded. The helical transmembrane segment at 105–126 (LWLALDYVASNASVMNLLVISF) threads the bilayer. Residues 127–146 (DRYFSITRPLTYRAKRTPKR) lie on the Cytoplasmic side of the membrane. The helical transmembrane segment at 147 to 169 (AGVMIGLAWLISFILWAPAILCW) threads the bilayer. Residues 170-191 (QYLVGKRTVPLDECQIQFLSEP) lie on the Extracellular side of the membrane. A helical membrane pass occupies residues 192 to 214 (TITFGTAIAAFYIPVSVMTILYC). Residues 215-443 (RIYRETEKRT…LVKERKAAQT (229 aa)) lie on the Cytoplasmic side of the membrane. The tract at residues 262–365 (AQRERNQTSW…SDTPNYFLSP (104 aa)) is disordered. Residues 269-281 (TSWSSSRRSASTS) are compositionally biased toward low complexity. A compositionally biased stretch (polar residues) spans 282–308 (GKPSQATDPSTNQAKAEQLTTCSSYPS). A helical membrane pass occupies residues 444–464 (LSAILLAFIITWTPYNIMVLV). The Extracellular portion of the chain corresponds to 465–478 (STFCDKCVPVTLWH). A helical transmembrane segment spans residues 479–498 (LGYWLCYVNSTVNPICYALC). At 499–532 (NRTFRKTFKMLLLCRWKKKKVEEKLYWQGNSKLP) the chain is on the cytoplasmic side. Phosphothreonine occurs at positions 501 and 505.

It belongs to the G-protein coupled receptor 1 family. Muscarinic acetylcholine receptor subfamily. CHRM5 sub-subfamily.

It localises to the cell membrane. The protein resides in the postsynaptic cell membrane. The muscarinic acetylcholine receptor mediates various cellular responses, including inhibition of adenylate cyclase, breakdown of phosphoinositides and modulation of potassium channels through the action of G proteins. Primary transducing effect is Pi turnover. This chain is Muscarinic acetylcholine receptor M5 (CHRM5), found in Macaca mulatta (Rhesus macaque).